The chain runs to 591 residues: Speriolin (591 aa).

Positions 1–42 (MSLLTNYEGLRHQIERLVRENEELKKLVRLIRENHELKSAIK) form a coiled coil. Residues 1 to 78 (MSLLTNYEGL…NNGVFLPPSP (78 aa)) are necessary for targeting centrosomes. Over residues 302–314 (NTSDTQAQPSAAQ) the composition is skewed to polar residues. Disordered regions lie at residues 302–331 (NTSDTQAQPSAAQEQVVPASVPTSPTTSPT) and 346–435 (ATSY…ENPR). Positions 317-331 (VVPASVPTSPTTSPT) are enriched in low complexity. 2 stretches are compositionally biased toward polar residues: residues 346–357 (ATSYTPSSTTHI) and 390–401 (PRTSSSPASVND).

This sequence belongs to the speriolin family. As to quaternary structure, found in a complex with CDC20, CDC27 and TUBG1. Interacts with CDC20. In terms of tissue distribution, detected only in testis.

It localises to the cytoplasm. It is found in the cytoskeleton. The protein localises to the microtubule organizing center. The protein resides in the centrosome. This is Speriolin (SPATC1) from Homo sapiens (Human).